We begin with the raw amino-acid sequence, 197 residues long: Na(+)-translocating NADH-quinone reductase subunit E (197 aa).

The next 6 helical transmembrane spans lie at 11–31, 35–55, 76–96, 108–128, 139–159, and 175–195; these read SVFI…FLAV, VSTA…SVPA, FLKF…LEMF, LGIY…VSFM, VVYG…LAGI, and LGIT…FSGI.

This sequence belongs to the NqrDE/RnfAE family. In terms of assembly, composed of six subunits; NqrA, NqrB, NqrC, NqrD, NqrE and NqrF.

The protein resides in the cell inner membrane. It carries out the reaction a ubiquinone + n Na(+)(in) + NADH + H(+) = a ubiquinol + n Na(+)(out) + NAD(+). Its function is as follows. NQR complex catalyzes the reduction of ubiquinone-1 to ubiquinol by two successive reactions, coupled with the transport of Na(+) ions from the cytoplasm to the periplasm. NqrA to NqrE are probably involved in the second step, the conversion of ubisemiquinone to ubiquinol. In Neisseria gonorrhoeae (strain ATCC 700825 / FA 1090), this protein is Na(+)-translocating NADH-quinone reductase subunit E.